Reading from the N-terminus, the 388-residue chain is Mannitol-1-phosphate 5-dehydrogenase (388 aa).

5–16 (AVHFGGGNIGRG) lines the NAD(+) pocket. The active site involves K213.

The protein belongs to the mannitol dehydrogenase family. Monomer.

The enzyme catalyses D-mannitol 1-phosphate + NAD(+) = beta-D-fructose 6-phosphate + NADH + H(+). Functionally, catalyzes the NAD(H)-dependent interconversion of D-fructose 6-phosphate and D-mannitol 1-phosphate in the mannitol metabolic pathway. The polypeptide is Mannitol-1-phosphate 5-dehydrogenase (Ajellomyces capsulatus (strain NAm1 / WU24) (Darling's disease fungus)).